The primary structure comprises 417 residues: UDP-N-acetylglucosamine 1-carboxyvinyltransferase (417 aa).

Phosphoenolpyruvate is bound at residue 22 to 23; the sequence is KN. Arg-92 is a UDP-N-acetyl-alpha-D-glucosamine binding site. Residue Cys-116 is the Proton donor of the active site. Cys-116 is modified (2-(S-cysteinyl)pyruvic acid O-phosphothioketal). Residues Asp-304 and Ile-326 each contribute to the UDP-N-acetyl-alpha-D-glucosamine site.

Belongs to the EPSP synthase family. MurA subfamily.

It localises to the cytoplasm. It catalyses the reaction phosphoenolpyruvate + UDP-N-acetyl-alpha-D-glucosamine = UDP-N-acetyl-3-O-(1-carboxyvinyl)-alpha-D-glucosamine + phosphate. It functions in the pathway cell wall biogenesis; peptidoglycan biosynthesis. Its function is as follows. Cell wall formation. Adds enolpyruvyl to UDP-N-acetylglucosamine. The protein is UDP-N-acetylglucosamine 1-carboxyvinyltransferase of Desulforapulum autotrophicum (strain ATCC 43914 / DSM 3382 / VKM B-1955 / HRM2) (Desulfobacterium autotrophicum).